The sequence spans 305 residues: tRNA dimethylallyltransferase (305 aa).

An ATP-binding site is contributed by 14 to 21 (GPTASGKS). 16-21 (TASGKS) provides a ligand contact to substrate. The tract at residues 39 to 42 (DSMQ) is interaction with substrate tRNA.

Belongs to the IPP transferase family. In terms of assembly, monomer. Requires Mg(2+) as cofactor.

The enzyme catalyses adenosine(37) in tRNA + dimethylallyl diphosphate = N(6)-dimethylallyladenosine(37) in tRNA + diphosphate. Its function is as follows. Catalyzes the transfer of a dimethylallyl group onto the adenine at position 37 in tRNAs that read codons beginning with uridine, leading to the formation of N6-(dimethylallyl)adenosine (i(6)A). The sequence is that of tRNA dimethylallyltransferase from Bradyrhizobium sp. (strain BTAi1 / ATCC BAA-1182).